The sequence spans 253 residues: Peptidase inhibitor R3HDML (253 aa).

Positions 1–24 are cleaved as a signal peptide; that stretch reads MPLLPSTVGLAGLLFWAGQAVNAL. A propeptide spanning residues 25–56 is cleaved from the precursor; sequence IMPNATPAPAQPESTAMRLLSGLEVPRYRRKR. Positions 67–207 constitute an SCP domain; that stretch reads LDYHNHIRAS…HRAAYLVCNY (141 aa). N-linked (GlcNAc...) asparagine glycosylation is present at N120.

The protein belongs to the CRISP family.

Its subcellular location is the secreted. Functionally, putative serine protease inhibitor. In Homo sapiens (Human), this protein is Peptidase inhibitor R3HDML (R3HDML).